The chain runs to 446 residues: Phosphoglucosamine mutase (446 aa).

Ser101 functions as the Phosphoserine intermediate in the catalytic mechanism. The Mg(2+) site is built by Ser101, Asp240, Asp242, and Asp244. Ser101 carries the phosphoserine modification.

This sequence belongs to the phosphohexose mutase family. Mg(2+) is required as a cofactor. Post-translationally, activated by phosphorylation.

The catalysed reaction is alpha-D-glucosamine 1-phosphate = D-glucosamine 6-phosphate. Functionally, catalyzes the conversion of glucosamine-6-phosphate to glucosamine-1-phosphate. In Pseudomonas putida (strain W619), this protein is Phosphoglucosamine mutase.